Reading from the N-terminus, the 100-residue chain is Urease subunit gamma (100 aa).

Belongs to the urease gamma subunit family. As to quaternary structure, heterotrimer of UreA (gamma), UreB (beta) and UreC (alpha) subunits. Three heterotrimers associate to form the active enzyme.

It localises to the cytoplasm. It carries out the reaction urea + 2 H2O + H(+) = hydrogencarbonate + 2 NH4(+). Its pathway is nitrogen metabolism; urea degradation; CO(2) and NH(3) from urea (urease route): step 1/1. The protein is Urease subunit gamma of Cyanothece sp. (strain PCC 7425 / ATCC 29141).